We begin with the raw amino-acid sequence, 583 residues long: PTS system lactose-specific EIICB component (583 aa).

One can recognise a PTS EIIC type-3 domain in the interval Ile-8–Phe-409. Transmembrane regions (helical) follow at residues Gly-30–Val-50, Gly-64–Thr-84, Ile-103–Pro-123, Lys-137–Ile-157, Val-176–Leu-196, Gly-222–His-242, Phe-283–Leu-303, Val-339–Val-359, and Ile-381–Val-401. Low complexity predominate over residues Ala-453–Ala-462. The segment at Ala-453–Asn-475 is disordered. Residues Gln-480 to Lys-583 enclose the PTS EIIB type-3 domain. The active-site Phosphocysteine intermediate; for EIIB activity is the Cys-487. Cys-487 carries the post-translational modification Phosphocysteine; by EIIA.

The protein localises to the cell membrane. The enzyme catalyses lactose(out) + N(pros)-phospho-L-histidyl-[protein] = lactose 6-phosphate(in) + L-histidyl-[protein]. Functionally, the phosphoenolpyruvate-dependent sugar phosphotransferase system (sugar PTS), a major carbohydrate active transport system, catalyzes the phosphorylation of incoming sugar substrates concomitantly with their translocation across the cell membrane. The enzyme II LacEF PTS system is involved in lactose transport. The sequence is that of PTS system lactose-specific EIICB component from Staphylococcus haemolyticus (strain JCSC1435).